A 583-amino-acid polypeptide reads, in one-letter code: Extracellular serine/threonine protein kinase four-jointed (583 aa).

At Met-1–Cys-78 the chain is on the cytoplasmic side. The helical; Signal-anchor for type II membrane protein transmembrane segment at Leu-79–Phe-99 threads the bilayer. The Extracellular portion of the chain corresponds to Gly-100 to Ser-583. A disordered region spans residues Arg-179–Gln-222. A compositionally biased stretch (basic and acidic residues) spans Lys-187 to Glu-199. The segment covering Thr-206–Ser-219 has biased composition (low complexity). Asn-310 and Asn-379 each carry an N-linked (GlcNAc...) asparagine glycan. Positions Met-384–Thr-421 are disordered. Residue Asn-491 is glycosylated (N-linked (GlcNAc...) asparagine).

Belongs to the FJX1/FJ family. In terms of processing, proteolytically cleaved to yield a secreted protein. In terms of tissue distribution, in the eye disk, expressed in a gradient ahead of the morphogenetic furrow, high at the equator and low at the poles of the eye. In the leg disk, expressed in concentric rings, possibly corresponding to segmental boundaries. In the wing disk, expression is localized in the wing pouch; low in peripheral regions and high towards the center.

The protein resides in the golgi apparatus membrane. Its subcellular location is the secreted. The enzyme catalyses L-seryl-[protein] + ATP = O-phospho-L-seryl-[protein] + ADP + H(+). It carries out the reaction L-threonyl-[protein] + ATP = O-phospho-L-threonyl-[protein] + ADP + H(+). Golgi serine/threonine protein kinase required for intermediate growth in the proximal-distal axis. Phosphorylates specific residues within extracellular cadherin domains of Fat (ft) and Dachsous (ds) as they transit through the Golgi. Acts in ommatidial polarity determination as a secondary signal downstream of Notch, JAK/STAT and wingless. Also necessary for the initiation, up-regulation or maintenance of Notch ligand, Serrate (Ser) expression in legs, thereby participating in a feedback loop with N signaling. Sufficient for joint formation and growth in the leg. This chain is Extracellular serine/threonine protein kinase four-jointed, found in Drosophila melanogaster (Fruit fly).